Reading from the N-terminus, the 426-residue chain is Glutamate-1-semialdehyde 2,1-aminomutase (426 aa).

K265 carries the post-translational modification N6-(pyridoxal phosphate)lysine.

The protein belongs to the class-III pyridoxal-phosphate-dependent aminotransferase family. HemL subfamily. Homodimer. The cofactor is pyridoxal 5'-phosphate.

It localises to the cytoplasm. The enzyme catalyses (S)-4-amino-5-oxopentanoate = 5-aminolevulinate. Its pathway is porphyrin-containing compound metabolism; protoporphyrin-IX biosynthesis; 5-aminolevulinate from L-glutamyl-tRNA(Glu): step 2/2. The chain is Glutamate-1-semialdehyde 2,1-aminomutase from Enterobacter sp. (strain 638).